We begin with the raw amino-acid sequence, 1115 residues long: Scavenger receptor cysteine-rich type 1 protein M130 (1115 aa).

The signal sequence occupies residues 1–46 (MDKLRMVLHENSGSADFRRCSAHLSSFTFAVVAVLSACLVTSSLGG). Residues 47 to 1044 (KDKELRLTGG…ESLHATGRSS (998 aa)) lie on the Extracellular side of the membrane. 9 SRCR domains span residues 51–151 (LRLT…VTCS), 158–258 (MGLV…VICL), 265–365 (LRVV…VTCS), 372–472 (LRLK…ITCS), 477–577 (PRLV…VVCS), 582–682 (IRLV…VICS), 718–818 (LRLV…VICS), 823–925 (LRLI…ITCA), and 928–1028 (IRLQ…VTCS). 23 disulfides stabilise this stretch: Cys-76–Cys-140, Cys-89–Cys-150, Cys-120–Cys-130, Cys-183–Cys-247, Cys-196–Cys-257, Cys-227–Cys-237, Cys-290–Cys-354, Cys-303–Cys-364, Cys-334–Cys-344, Cys-397–Cys-461, Cys-410–Cys-471, Cys-441–Cys-451, Cys-502–Cys-566, Cys-515–Cys-576, Cys-546–Cys-556, Cys-607–Cys-671, Cys-620–Cys-681, Cys-651–Cys-661, Cys-743–Cys-807, Cys-756–Cys-817, Cys-787–Cys-797, Cys-863–Cys-924, and Cys-894–Cys-904. Residue Asn-105 is glycosylated (N-linked (GlcNAc...) asparagine). Residue Asn-139 is glycosylated (N-linked (GlcNAc...) asparagine). Asn-936 carries an N-linked (GlcNAc...) asparagine glycan. Disulfide bonds link Cys-953–Cys-1017, Cys-966–Cys-1027, and Cys-997–Cys-1007. The helical transmembrane segment at 1045 to 1065 (FVALAIFGVILLACLIAFLIW) threads the bilayer. The Cytoplasmic segment spans residues 1066-1115 (TQKRRQRQRLSVFSGGENSVHQIQYREMNSCLKADETDMLNPSGDHSEVQ). The Internalization signal motif lies at 1090-1093 (YREM).

Interacts with CSNK2B. A soluble form (sCD163) is produced by proteolytic shedding which can be induced by lipopolysaccharide, phorbol ester and Fc region of immunoglobulin gamma. This cleavage is dependent on protein kinase C and tyrosine kinases and can be blocked by protease inhibitors. The shedding is inhibited by the tissue inhibitor of metalloproteinase TIMP3, and thus probably induced by membrane-bound metalloproteinases ADAMs. In terms of processing, phosphorylated. In terms of tissue distribution, expressed in monocytes and macrophages. Detected only in one population of monocytes (CD163+) which is in advanced maturation stage.

It is found in the secreted. Its subcellular location is the cell membrane. Functionally, involved in clearance and endocytosis of hemoglobin/haptoglobin complexes by macrophages and may thereby protect tissues from free hemoglobin-mediated oxidative damage. May play a role in the uptake and recycling of iron, via endocytosis of hemoglobin/haptoglobin and subsequent breakdown of heme. Binds hemoglobin/haptoglobin complexes in a calcium-dependent and pH-dependent manner. Induces a cascade of intracellular signals that involves tyrosine kinase-dependent calcium mobilization, inositol triphosphate production and secretion of IL6 and CSF1. May play a role in the process of infection of porcine monocytes/macrophages by African swine fever virus (ASFV). In case of porcine reproductive and respiratory syndrome virus (PRRSV), serves mediates virion attachment and plays a role in viral entry. After shedding, the soluble form (sCD163) may play an anti-inflammatory role. The sequence is that of Scavenger receptor cysteine-rich type 1 protein M130 (CD163) from Sus scrofa (Pig).